We begin with the raw amino-acid sequence, 37 residues long: Large ribosomal subunit protein bL36c (37 aa).

Belongs to the bacterial ribosomal protein bL36 family.

It is found in the plastid. The protein localises to the chloroplast. This is Large ribosomal subunit protein bL36c from Gracilaria tenuistipitata var. liui (Red alga).